Consider the following 217-residue polypeptide: Ras-related protein Rab-39A (217 aa).

GTP contacts are provided by serine 17, glycine 20, lysine 21, serine 22, cysteine 23, and threonine 44. Serine 22 is a binding site for Mg(2+). The segment at 39 to 47 is switch-I; the sequence is PACDPTVGV. The Mg(2+) site is built by threonine 44 and aspartate 68. The GTP site is built by glycine 71, histidine 127, lysine 128, aspartate 130, alanine 158, and lysine 159. Residues 71 to 87 are switch-II; the sequence is GQERFRSITRSYYRNSV. Residues cysteine 215 and cysteine 217 are each lipidated (S-geranylgeranyl cysteine). Cysteine methyl ester is present on cysteine 217.

Belongs to the small GTPase superfamily. Rab family. As to quaternary structure, interacts (GDP-bound) with C9orf72; C9orf72 acts as a GEF for RAB39A. Interacts (GTP-bound) with HOPS complex components VPS39 and VPS41, and STX17; interaction between HOPS components and RAB39A contributes to obtaining a functional HOPS complex that promotes membrane fusion driven by STX17-SNAP29-VAMP8. Interacts with BECN1. Probably associates with the PI3K (PI3KC3/PI3K-III/class III phosphatidylinositol 3-kinase) complex. Interacts with UACA. Interacts with isoform a of RASSF1. Does not interact with isoform c of RASSF1. Mg(2+) is required as a cofactor. Prenylated. Prenylation is required for association with cellular membranes.

It is found in the cell membrane. The protein resides in the cytoplasmic vesicle. Its subcellular location is the phagosome membrane. The protein localises to the lysosome membrane. It localises to the autolysosome membrane. It catalyses the reaction GTP + H2O = GDP + phosphate + H(+). Its activity is regulated as follows. Regulated by guanine nucleotide exchange factors (GEFs) including c9Orf72, which promote the exchange of bound GDP for free GTP. Regulated by GTPase activating proteins (GAPs) which increase the GTP hydrolysis activity. Inhibited by GDP dissociation inhibitors (GDIs). Functionally, the small GTPases Rab are key regulators of intracellular membrane trafficking, from the formation of transport vesicles to their fusion with membranes. Rabs cycle between an inactive GDP-bound form and an active GTP-bound form that is able to recruit to membranes different sets of downstream effectors directly responsible for vesicle formation, movement, tethering and fusion. RAB39A regulates autophagosome-lysosome fusion via recruitment of the HOPS endosomal tethering complex onto lysosomes; this process involves lysosomal RAB39A and autophagosomal RAB2A recruitment of HOPS subcomplexes VPS41-VPS16-VPS18-VPS33A and VPS39-VPS11, respectively, which assemble into a functional complex to mediate membrane tethering and SNAREs-driven membrane fusion. Also negatively regulates lipopolysaccharide (LPS)-induced autophagosome formation in macrophages, possibly by implicating PI3K. Promotes the delivery of MHC-I molecules from the ER to phagosomes and the generation of peptide-loaded MHC-I complexes in phagosomes, thus enhancing antigen cross-presentation by dendritic cells. Plays a role in the maturation and acidification of phagosomes that engulf pathogens, such as S.aureus and M.tuberculosis. Plays a role in the fusion of phagosomes with lysosomes. May be involved in multiple neurite formation. The protein is Ras-related protein Rab-39A of Homo sapiens (Human).